Reading from the N-terminus, the 443-residue chain is Tubulin beta-2 chain (443 aa).

The MREI motif signature appears at 1 to 4; it reads MREI. GTP-binding residues include Gln11, Glu69, Ser138, Gly142, Thr143, Gly144, Asn204, and Asn226. A Mg(2+)-binding site is contributed by Glu69. Glu438 is modified (5-glutamyl polyglutamate).

This sequence belongs to the tubulin family. Dimer of alpha and beta chains. A typical microtubule is a hollow water-filled tube with an outer diameter of 25 nm and an inner diameter of 15 nM. Alpha-beta heterodimers associate head-to-tail to form protofilaments running lengthwise along the microtubule wall with the beta-tubulin subunit facing the microtubule plus end conferring a structural polarity. Microtubules usually have 13 protofilaments but different protofilament numbers can be found in some organisms and specialized cells. Mg(2+) is required as a cofactor. Some glutamate residues at the C-terminus are polyglycylated, resulting in polyglycine chains on the gamma-carboxyl group. Glycylation is mainly limited to tubulin incorporated into axonemes (cilia and flagella) whereas glutamylation is prevalent in neuronal cells, centrioles, axonemes, and the mitotic spindle. Both modifications can coexist on the same protein on adjacent residues, and lowering polyglycylation levels increases polyglutamylation, and reciprocally. The precise function of polyglycylation is still unclear. Post-translationally, some glutamate residues at the C-terminus are polyglutamylated, resulting in polyglutamate chains on the gamma-carboxyl group. Polyglutamylation plays a key role in microtubule severing by spastin (SPAST). SPAST preferentially recognizes and acts on microtubules decorated with short polyglutamate tails: severing activity by SPAST increases as the number of glutamates per tubulin rises from one to eight, but decreases beyond this glutamylation threshold. As to expression, nervous system specific.

The protein resides in the cytoplasm. It is found in the cytoskeleton. Its function is as follows. Tubulin is the major constituent of microtubules, a cylinder consisting of laterally associated linear protofilaments composed of alpha- and beta-tubulin heterodimers. Microtubules grow by the addition of GTP-tubulin dimers to the microtubule end, where a stabilizing cap forms. Below the cap, tubulin dimers are in GDP-bound state, owing to GTPase activity of alpha-tubulin. In Xenopus laevis (African clawed frog), this protein is Tubulin beta-2 chain (tubb2).